Consider the following 726-residue polypeptide: Catalase-peroxidase 1 (726 aa).

The disordered stretch occupies residues methionine 1 to threonine 33. Residues tryptophan 105–tyrosine 226 constitute a cross-link (tryptophyl-tyrosyl-methioninium (Trp-Tyr) (with M-252)). The active-site Proton acceptor is the histidine 106. The segment at residues tyrosine 226 to methionine 252 is a cross-link (tryptophyl-tyrosyl-methioninium (Tyr-Met) (with W-105)). Histidine 267 serves as a coordination point for heme b.

This sequence belongs to the peroxidase family. Peroxidase/catalase subfamily. As to quaternary structure, homodimer or homotetramer. Heme b serves as cofactor. In terms of processing, formation of the three residue Trp-Tyr-Met cross-link is important for the catalase, but not the peroxidase activity of the enzyme.

It carries out the reaction H2O2 + AH2 = A + 2 H2O. The catalysed reaction is 2 H2O2 = O2 + 2 H2O. In terms of biological role, bifunctional enzyme with both catalase and broad-spectrum peroxidase activity. This is Catalase-peroxidase 1 from Escherichia coli O157:H7.